The sequence spans 343 residues: Protein-glutamate methylesterase/protein-glutamine glutaminase 2 (343 aa).

Residues 5 to 122 (KVLVVDDSAI…SVGDMSGQLV (118 aa)) enclose the Response regulatory domain. Aspartate 56 carries the post-translational modification 4-aspartylphosphate. Residues 154-343 (AETSNKVIAI…SIADEIVRMV (190 aa)) enclose the CheB-type methylesterase domain. Catalysis depends on residues serine 166, histidine 192, and aspartate 288.

The protein belongs to the CheB family. In terms of processing, phosphorylated by CheA. Phosphorylation of the N-terminal regulatory domain activates the methylesterase activity.

It localises to the cytoplasm. The enzyme catalyses [protein]-L-glutamate 5-O-methyl ester + H2O = L-glutamyl-[protein] + methanol + H(+). It catalyses the reaction L-glutaminyl-[protein] + H2O = L-glutamyl-[protein] + NH4(+). In terms of biological role, involved in chemotaxis. Part of a chemotaxis signal transduction system that modulates chemotaxis in response to various stimuli. Catalyzes the demethylation of specific methylglutamate residues introduced into the chemoreceptors (methyl-accepting chemotaxis proteins or MCP) by CheR. Also mediates the irreversible deamidation of specific glutamine residues to glutamic acid. This is Protein-glutamate methylesterase/protein-glutamine glutaminase 2 from Syntrophus aciditrophicus (strain SB).